A 219-amino-acid polypeptide reads, in one-letter code: Probable octanoyltransferase (219 aa).

The BPL/LPL catalytic domain occupies 43–219 (QPPKPTIITS…NNLDSFLMSK (177 aa)). Residues 83–90 (RGGQTTFH), 151–153 (AIG), and 164–166 (GLA) each bind substrate. Cys182 functions as the Acyl-thioester intermediate in the catalytic mechanism.

This sequence belongs to the LipB family.

The enzyme catalyses octanoyl-[ACP] + L-lysyl-[protein] = N(6)-octanoyl-L-lysyl-[protein] + holo-[ACP] + H(+). The protein operates within protein modification; protein lipoylation via endogenous pathway; protein N(6)-(lipoyl)lysine from octanoyl-[acyl-carrier-protein]: step 1/2. Its function is as follows. Catalyzes the transfer of endogenously produced octanoic acid from octanoyl-acyl-carrier-protein onto the lipoyl domains of lipoate-dependent enzymes. Lipoyl-ACP can also act as a substrate although octanoyl-ACP is likely to be the physiological substrate. The polypeptide is Probable octanoyltransferase (Schizosaccharomyces pombe (strain 972 / ATCC 24843) (Fission yeast)).